Here is a 197-residue protein sequence, read N- to C-terminus: Probable nicotinate-nucleotide adenylyltransferase (197 aa).

Belongs to the NadD family.

It carries out the reaction nicotinate beta-D-ribonucleotide + ATP + H(+) = deamido-NAD(+) + diphosphate. It functions in the pathway cofactor biosynthesis; NAD(+) biosynthesis; deamido-NAD(+) from nicotinate D-ribonucleotide: step 1/1. Its function is as follows. Catalyzes the reversible adenylation of nicotinate mononucleotide (NaMN) to nicotinic acid adenine dinucleotide (NaAD). The chain is Probable nicotinate-nucleotide adenylyltransferase from Neisseria meningitidis serogroup C (strain 053442).